Here is a 646-residue protein sequence, read N- to C-terminus: Translation initiation factor IF-2 (646 aa).

The 170-residue stretch at 146–315 folds into the tr-type G domain; that stretch reads PRPPVVTVMG…LLVAEMEELR (170 aa). The interval 155-162 is G1; the sequence is GHVDHGKT. Residue 155–162 participates in GTP binding; the sequence is GHVDHGKT. Residues 180–184 are G2; it reads GITQH. The segment at 201–204 is G3; the sequence is DTPG. GTP-binding positions include 201 to 205 and 255 to 258; these read DTPGH and NKID. The interval 255-258 is G4; that stretch reads NKID. Residues 291 to 293 are G5; that stretch reads SAK.

It belongs to the TRAFAC class translation factor GTPase superfamily. Classic translation factor GTPase family. IF-2 subfamily.

Its subcellular location is the cytoplasm. Functionally, one of the essential components for the initiation of protein synthesis. Protects formylmethionyl-tRNA from spontaneous hydrolysis and promotes its binding to the 30S ribosomal subunits. Also involved in the hydrolysis of GTP during the formation of the 70S ribosomal complex. The polypeptide is Translation initiation factor IF-2 (Clostridioides difficile (strain 630) (Peptoclostridium difficile)).